A 105-amino-acid polypeptide reads, in one-letter code: Large ribosomal subunit protein eL36 (105 aa).

The protein belongs to the eukaryotic ribosomal protein eL36 family. As to quaternary structure, component of the large ribosomal subunit.

The protein resides in the cytoplasm. It localises to the cytosol. In terms of biological role, component of the large ribosomal subunit. The ribosome is a large ribonucleoprotein complex responsible for the synthesis of proteins in the cell. This Hydrophis hardwickii (Hardwick's spine-bellied seasnake) protein is Large ribosomal subunit protein eL36 (RPL36).